The sequence spans 489 residues: Pre-glycoprotein polyprotein GP complex (489 aa).

Glycine 2 carries N-myristoyl glycine; by host lipidation. Topologically, residues 2 to 17 (GQIVTFFQEVPHILEE) are extracellular. The chain crosses the membrane as a helical span at residues 18 to 33 (VMNIVLMTLSILAILK). Over 34-58 (GIYNVMTCGIIGLITFLFLCGRSCS) the chain is Cytoplasmic. Cysteine 57 serves as a coordination point for Zn(2+). At 59–430 (SIYKDNYEFF…QSTTPLGLVD (372 aa)) the chain is on the extracellular side. N-linked (GlcNAc...) asparagine; by host glycans are attached at residues asparagine 78, asparagine 88, asparagine 98, asparagine 108, asparagine 118, and asparagine 166. Intrachain disulfides connect cysteine 85–cysteine 229, cysteine 117–cysteine 154, cysteine 179–cysteine 210, cysteine 277–cysteine 290, cysteine 299–cysteine 308, and cysteine 362–cysteine 383. Residue asparagine 222 is glycosylated (N-linked (GlcNAc...) asparagine; by host). Residues asparagine 363, asparagine 371, asparagine 388, and asparagine 393 are each glycosylated (N-linked (GlcNAc...) asparagine; by host). The helical transmembrane segment at 431–451 (LFVFSTSFYLISVFLHLIKIP) threads the bilayer. The Cytoplasmic portion of the chain corresponds to 452-489 (THRHIKGKPCPKPHRLNHMAICSCGFYKQPGLPTQWKR). Residues histidine 453, histidine 455, cysteine 461, histidine 465, cysteine 473, and cysteine 475 each coordinate Zn(2+).

The protein belongs to the arenaviridae GPC protein family. As to quaternary structure, interacts with glycoprotein G2. Part of the GP complex (GP-C) together with glycoprotein G1 and glycoprotein G2. The GP-complex interacts with protein Z, which interacts with ribonucleocapsid; these interactions may induce virion budding. Homotrimer; disulfide-linked. In pre-fusion state, G1 homotrimers bind G2 homotrimers via ionic interactions. Part of the GP complex (GP-C) together with glycoprotein G2 and the stable signal peptide. The GP-complex interacts with protein Z, which interacts with ribonucleocapsid; these interactions may induce virion budding. In terms of assembly, homotrimer. Interacts with the stable signal peptide. In pre-fusion state, G2 homotrimers bind G1 homotrimers via ionic interactions. Part of the GP complex (GP-C) together with glycoprotein G1 and the stable signal peptide. Acidification in the endosome triggers rearrangements, which ultimately leads to a 6 helix bundle formed by the two heptad repeat domains (HR1 and HR2) in post-fusion state. The GP-complex interacts with protein Z, which interacts with ribonucleocapsid; these interactions may induce virion budding. In terms of processing, specific enzymatic cleavages in vivo yield mature proteins. GP-C polyprotein is cleaved in the endoplasmic reticulum by the host protease MBTPS1. Only cleaved glycoprotein is incorporated into virions. The SSP remains stably associated with the GP complex following cleavage by signal peptidase and plays crucial roles in the trafficking of GP through the secretory pathway. Post-translationally, myristoylation is necessary for GP2-mediated fusion activity.

The protein localises to the virion membrane. Its subcellular location is the host endoplasmic reticulum membrane. The protein resides in the host Golgi apparatus membrane. It is found in the host cell membrane. In terms of biological role, functions as a cleaved signal peptide that is retained as the third component of the GP complex (GP-C). Helps to stabilize the spike complex in its native conformation. The SSP is required for efficient glycoprotein expression, post-translational maturation cleavage of G1 and G2, glycoprotein transport to the cell surface plasma membrane, formation of infectious virus particles, and acid pH-dependent glycoprotein-mediated cell fusion. Forms the virion spikes together with glycoprotein G2. The glycoprotein spike trimers are connected to the underlying matrix. Interacts with the host receptor leading to virus endocytosis. Functionally, forms the virion spikes together with glycoprotein G1. The glycoprotein spike trimers are connected to the underlying matrix. Class I viral fusion protein that directs fusion of viral and host endosomal membranes, leading to delivery of the nucleocapsid into the cytoplasm. Membrane fusion is mediated by irreversible conformational changes induced by acidification. This is Pre-glycoprotein polyprotein GP complex from Mastomys natalensis (African soft-furred rat).